Reading from the N-terminus, the 315-residue chain is Methionyl-tRNA formyltransferase (315 aa).

Residue Ser-113–Pro-116 participates in (6S)-5,6,7,8-tetrahydrofolate binding.

Belongs to the Fmt family.

The catalysed reaction is L-methionyl-tRNA(fMet) + (6R)-10-formyltetrahydrofolate = N-formyl-L-methionyl-tRNA(fMet) + (6S)-5,6,7,8-tetrahydrofolate + H(+). Functionally, attaches a formyl group to the free amino group of methionyl-tRNA(fMet). The formyl group appears to play a dual role in the initiator identity of N-formylmethionyl-tRNA by promoting its recognition by IF2 and preventing the misappropriation of this tRNA by the elongation apparatus. The chain is Methionyl-tRNA formyltransferase from Shigella flexneri serotype 5b (strain 8401).